The sequence spans 140 residues: Organic hydroperoxide resistance protein-like (140 aa).

The protein belongs to the OsmC/Ohr family.

In Staphylococcus aureus (strain MRSA252), this protein is Organic hydroperoxide resistance protein-like.